A 432-amino-acid chain; its full sequence is Trigger factor (432 aa).

The PPIase FKBP-type domain occupies 161-246 (GSRATIDFVG…LNKVEARELP (86 aa)).

Belongs to the FKBP-type PPIase family. Tig subfamily.

It is found in the cytoplasm. The enzyme catalyses [protein]-peptidylproline (omega=180) = [protein]-peptidylproline (omega=0). In terms of biological role, involved in protein export. Acts as a chaperone by maintaining the newly synthesized protein in an open conformation. Functions as a peptidyl-prolyl cis-trans isomerase. This Vibrio atlanticus (strain LGP32) (Vibrio splendidus (strain Mel32)) protein is Trigger factor.